Consider the following 31-residue polypeptide: Chymotrypsin (31 aa).

Residues 1 to 31 enclose the Peptidase S1 domain; it reads IVGGVEAVPGVWPYQAALFIIDMYFCGGSLI.

The protein belongs to the peptidase S1 family.

It is found in the secreted. It localises to the extracellular space. The catalysed reaction is Preferential cleavage: Tyr-|-Xaa, Trp-|-Xaa, Phe-|-Xaa, Leu-|-Xaa.. This is Chymotrypsin from Penaeus monodon (Giant tiger prawn).